The sequence spans 160 residues: Cytochrome b6-f complex subunit 4 (160 aa).

3 consecutive transmembrane segments (helical) span residues 36–56 (ILYM…GLSI), 95–115 (LVGV…PFIE), and 127–147 (PIAT…GIGA).

This sequence belongs to the cytochrome b family. PetD subfamily. In terms of assembly, the 4 large subunits of the cytochrome b6-f complex are cytochrome b6, subunit IV (17 kDa polypeptide, petD), cytochrome f and the Rieske protein, while the 4 small subunits are petG, petL, petM and petN. The complex functions as a dimer.

It is found in the plastid. It localises to the chloroplast thylakoid membrane. Component of the cytochrome b6-f complex, which mediates electron transfer between photosystem II (PSII) and photosystem I (PSI), cyclic electron flow around PSI, and state transitions. The chain is Cytochrome b6-f complex subunit 4 from Gracilaria tenuistipitata var. liui (Red alga).